Reading from the N-terminus, the 92-residue chain is Small ribosomal subunit protein uS19 (92 aa).

Residues 73-92 form a disordered region; that stretch reads EFSPTRSFRGHAGAKNKGRK. Over residues 80–92 the composition is skewed to basic residues; the sequence is FRGHAGAKNKGRK.

Belongs to the universal ribosomal protein uS19 family.

Its function is as follows. Protein S19 forms a complex with S13 that binds strongly to the 16S ribosomal RNA. In Christiangramia forsetii (strain DSM 17595 / CGMCC 1.15422 / KT0803) (Gramella forsetii), this protein is Small ribosomal subunit protein uS19.